Consider the following 317-residue polypeptide: DNA-directed RNA polymerase subunit alpha (317 aa).

The tract at residues 1–229 (MLNEFIYPDK…KHYELLENIF (229 aa)) is alpha N-terminal domain (alpha-NTD). Residues 245-317 (AEKLSLSIEE…ELGMNIETQR (73 aa)) are alpha C-terminal domain (alpha-CTD).

Belongs to the RNA polymerase alpha chain family. In terms of assembly, homodimer. The RNAP catalytic core consists of 2 alpha, 1 beta, 1 beta' and 1 omega subunit. When a sigma factor is associated with the core the holoenzyme is formed, which can initiate transcription.

The catalysed reaction is RNA(n) + a ribonucleoside 5'-triphosphate = RNA(n+1) + diphosphate. Its function is as follows. DNA-dependent RNA polymerase catalyzes the transcription of DNA into RNA using the four ribonucleoside triphosphates as substrates. This is DNA-directed RNA polymerase subunit alpha from Aquifex aeolicus (strain VF5).